Consider the following 311-residue polypeptide: Ornithine carbamoyltransferase (311 aa).

Carbamoyl phosphate-binding positions include 52 to 55, glutamine 79, arginine 103, and 129 to 132; these read STRT and HPVQ. Residues asparagine 167, aspartate 226, and 230–231 contribute to the L-ornithine site; that span reads SM. Residues 266–267 and arginine 294 each bind carbamoyl phosphate; that span reads CL.

Belongs to the aspartate/ornithine carbamoyltransferase superfamily. OTCase family.

The protein localises to the cytoplasm. It carries out the reaction carbamoyl phosphate + L-ornithine = L-citrulline + phosphate + H(+). Its pathway is amino-acid biosynthesis; L-arginine biosynthesis; L-arginine from L-ornithine and carbamoyl phosphate: step 1/3. Functionally, reversibly catalyzes the transfer of the carbamoyl group from carbamoyl phosphate (CP) to the N(epsilon) atom of ornithine (ORN) to produce L-citrulline. In Sorangium cellulosum (strain So ce56) (Polyangium cellulosum (strain So ce56)), this protein is Ornithine carbamoyltransferase.